Here is a 200-residue protein sequence, read N- to C-terminus: RPW8-like protein 4 (200 aa).

Positions 1-157 (MPIAELAVIK…MKAIQVDQWT (157 aa)) constitute an RPW8 domain. The helical transmembrane segment at 7–29 (AVIKTVGGPLIAAALGVGAQVIY) threads the bilayer. Residues 70–127 (REVHESLTRLLEDAKSIIEKYWKLRWSRHVCRKYRYIKKLESIELELVRVAREIQVHQ) are a coiled coil.

This sequence belongs to the plant RPW8 protein family.

The protein localises to the membrane. Probable disease resistance (R) protein. The polypeptide is RPW8-like protein 4 (HR4) (Arabidopsis thaliana (Mouse-ear cress)).